The sequence spans 585 residues: Arginine--tRNA ligase (585 aa).

The 'HIGH' region signature appears at 131–141 (ANPTGPMHVGH).

This sequence belongs to the class-I aminoacyl-tRNA synthetase family. In terms of assembly, monomer.

The protein localises to the cytoplasm. It catalyses the reaction tRNA(Arg) + L-arginine + ATP = L-arginyl-tRNA(Arg) + AMP + diphosphate. This chain is Arginine--tRNA ligase, found in Bartonella tribocorum (strain CIP 105476 / IBS 506).